The chain runs to 373 residues: Dual-specificity RNA methyltransferase RlmN (373 aa).

Residue Glu94 is the Proton acceptor of the active site. A Radical SAM core domain is found at 100 to 339; that stretch reads EEDRATLCVS…VIVRKTRGDD (240 aa). Residues Cys107 and Cys344 are joined by a disulfide bond. [4Fe-4S] cluster-binding residues include Cys114, Cys118, and Cys121. S-adenosyl-L-methionine contacts are provided by residues 168-169, Ser200, 222-224, and Asn301; these read GE and SIH. The active-site S-methylcysteine intermediate is the Cys344.

This sequence belongs to the radical SAM superfamily. RlmN family. [4Fe-4S] cluster is required as a cofactor.

The protein localises to the cytoplasm. The enzyme catalyses adenosine(2503) in 23S rRNA + 2 reduced [2Fe-2S]-[ferredoxin] + 2 S-adenosyl-L-methionine = 2-methyladenosine(2503) in 23S rRNA + 5'-deoxyadenosine + L-methionine + 2 oxidized [2Fe-2S]-[ferredoxin] + S-adenosyl-L-homocysteine. It catalyses the reaction adenosine(37) in tRNA + 2 reduced [2Fe-2S]-[ferredoxin] + 2 S-adenosyl-L-methionine = 2-methyladenosine(37) in tRNA + 5'-deoxyadenosine + L-methionine + 2 oxidized [2Fe-2S]-[ferredoxin] + S-adenosyl-L-homocysteine. Its function is as follows. Specifically methylates position 2 of adenine 2503 in 23S rRNA and position 2 of adenine 37 in tRNAs. m2A2503 modification seems to play a crucial role in the proofreading step occurring at the peptidyl transferase center and thus would serve to optimize ribosomal fidelity. The chain is Dual-specificity RNA methyltransferase RlmN from Shewanella frigidimarina (strain NCIMB 400).